Reading from the N-terminus, the 339-residue chain is UDP-N-acetylglucosamine--N-acetylmuramyl-(pentapeptide) pyrophosphoryl-undecaprenol N-acetylglucosamine transferase (339 aa).

UDP-N-acetyl-alpha-D-glucosamine is bound by residues 11–13 (TGG), N127, R170, S188, I235, and Q280.

It belongs to the glycosyltransferase 28 family. MurG subfamily.

It localises to the cell inner membrane. The enzyme catalyses di-trans,octa-cis-undecaprenyl diphospho-N-acetyl-alpha-D-muramoyl-L-alanyl-D-glutamyl-meso-2,6-diaminopimeloyl-D-alanyl-D-alanine + UDP-N-acetyl-alpha-D-glucosamine = di-trans,octa-cis-undecaprenyl diphospho-[N-acetyl-alpha-D-glucosaminyl-(1-&gt;4)]-N-acetyl-alpha-D-muramoyl-L-alanyl-D-glutamyl-meso-2,6-diaminopimeloyl-D-alanyl-D-alanine + UDP + H(+). It participates in cell wall biogenesis; peptidoglycan biosynthesis. Functionally, cell wall formation. Catalyzes the transfer of a GlcNAc subunit on undecaprenyl-pyrophosphoryl-MurNAc-pentapeptide (lipid intermediate I) to form undecaprenyl-pyrophosphoryl-MurNAc-(pentapeptide)GlcNAc (lipid intermediate II). This is UDP-N-acetylglucosamine--N-acetylmuramyl-(pentapeptide) pyrophosphoryl-undecaprenol N-acetylglucosamine transferase from Thermotoga neapolitana (strain ATCC 49049 / DSM 4359 / NBRC 107923 / NS-E).